Here is a 196-residue protein sequence, read N- to C-terminus: Putative lipopolysaccharide biosynthesis O-acetyl transferase WbbJ (196 aa).

Belongs to the transferase hexapeptide repeat family.

Its pathway is bacterial outer membrane biogenesis; lipopolysaccharide biosynthesis. Functionally, putative O-acetyltransferase that transfers an O-acetyl group to the O antigen. The chain is Putative lipopolysaccharide biosynthesis O-acetyl transferase WbbJ (wbbJ) from Escherichia coli (strain K12).